We begin with the raw amino-acid sequence, 382 residues long: Mannitol-1-phosphate 5-dehydrogenase (382 aa).

Residue 3–14 (ALHFGAGNIGRG) participates in NAD(+) binding. At lysine 269 the chain carries N6-acetyllysine.

Belongs to the mannitol dehydrogenase family.

It carries out the reaction D-mannitol 1-phosphate + NAD(+) = beta-D-fructose 6-phosphate + NADH + H(+). This Escherichia coli O7:K1 (strain IAI39 / ExPEC) protein is Mannitol-1-phosphate 5-dehydrogenase.